Here is a 120-residue protein sequence, read N- to C-terminus: NAD(P)H-quinone oxidoreductase subunit 3, chloroplastic (120 aa).

Helical transmembrane passes span 10–30 (FWFF…TSKL), 64–84 (MFAL…PWAM), and 89–109 (LGVY…IGLV).

It belongs to the complex I subunit 3 family. NDH is composed of at least 16 different subunits, 5 of which are encoded in the nucleus.

The protein resides in the plastid. The protein localises to the chloroplast thylakoid membrane. It carries out the reaction a plastoquinone + NADH + (n+1) H(+)(in) = a plastoquinol + NAD(+) + n H(+)(out). It catalyses the reaction a plastoquinone + NADPH + (n+1) H(+)(in) = a plastoquinol + NADP(+) + n H(+)(out). NDH shuttles electrons from NAD(P)H:plastoquinone, via FMN and iron-sulfur (Fe-S) centers, to quinones in the photosynthetic chain and possibly in a chloroplast respiratory chain. The immediate electron acceptor for the enzyme in this species is believed to be plastoquinone. Couples the redox reaction to proton translocation, and thus conserves the redox energy in a proton gradient. This Chaetosphaeridium globosum (Charophycean green alga) protein is NAD(P)H-quinone oxidoreductase subunit 3, chloroplastic.